The following is a 158-amino-acid chain: Small ribosomal subunit protein bS16 (158 aa).

Over residues 111 to 121 (AAAGLAEAPTK) the composition is skewed to low complexity. The tract at residues 111-158 (AAAGLAEAPTKPAKKAPKAEAAPKTEAAPKADAPKTEEQAGAGSGEQG) is disordered. The segment covering 127–148 (PKAEAAPKTEAAPKADAPKTEE) has biased composition (basic and acidic residues).

The protein belongs to the bacterial ribosomal protein bS16 family.

This chain is Small ribosomal subunit protein bS16, found in Salinispora arenicola (strain CNS-205).